Consider the following 518-residue polypeptide: Glutamate--cysteine ligase (518 aa).

Belongs to the glutamate--cysteine ligase type 1 family. Type 1 subfamily.

It catalyses the reaction L-cysteine + L-glutamate + ATP = gamma-L-glutamyl-L-cysteine + ADP + phosphate + H(+). Its pathway is sulfur metabolism; glutathione biosynthesis; glutathione from L-cysteine and L-glutamate: step 1/2. The protein is Glutamate--cysteine ligase of Escherichia coli O139:H28 (strain E24377A / ETEC).